Here is a 336-residue protein sequence, read N- to C-terminus: Spore photoproduct lyase (336 aa).

One can recognise a Radical SAM core domain in the interval 74–305 (CKPSANYQLP…KFGQFGYGKY (232 aa)). Positions 88, 92, and 95 each coordinate [4Fe-4S] cluster. The segment at residues 215–232 (ESAYNILNSGYKTGFIVG) is a DNA-binding region (H-T-H motif).

Belongs to the radical SAM superfamily. SPL family. In terms of assembly, monomer or homodimer. It depends on [4Fe-4S] cluster as a cofactor. The cofactor is S-adenosyl-L-methionine.

The enzyme catalyses (5R)-5,6-dihydro-5-(thymidin-7-yl)thymidine in DNA = a thymidine dimer in DNA. In terms of biological role, involved in repair of UV radiation-induced DNA damage during spore germination. Can repair thymine dimer 5-thyminyl-5,6-dihydrothymine (known as spore photoproduct (SP)) by in situ monomerization of SP to two thymines. The sequence is that of Spore photoproduct lyase (splB) from Clostridium acetobutylicum (strain ATCC 824 / DSM 792 / JCM 1419 / IAM 19013 / LMG 5710 / NBRC 13948 / NRRL B-527 / VKM B-1787 / 2291 / W).